We begin with the raw amino-acid sequence, 450 residues long: Tryptophan dimethylallyltransferase 2 (450 aa).

Residues 80–81 (IL) and Glu89 each bind L-tryptophan. The substrate site is built by Arg100, Lys186, and Tyr188. 2 residues coordinate L-tryptophan: Tyr190 and Arg251. Substrate-binding residues include Arg264, Lys266, Tyr268, Gln350, Tyr352, Tyr416, and Tyr420.

It belongs to the tryptophan dimethylallyltransferase family. In terms of assembly, homodimer.

The catalysed reaction is L-tryptophan + dimethylallyl diphosphate = 4-(3-methylbut-2-enyl)-L-tryptophan + diphosphate. The protein operates within alkaloid biosynthesis; ergot alkaloid biosynthesis. Functionally, catalyzes the first step of ergot alkaloid biosynthesis. Ergot alkaloids, which are produced by endophyte fungi, can enhance plant host fitness, but also cause livestock toxicosis to host plants. The sequence is that of Tryptophan dimethylallyltransferase 2 (dmaW2) from Epichloe coenophiala (Tall fescue endophyte fungus).